A 424-amino-acid polypeptide reads, in one-letter code: Hemagglutinin-esterase (424 aa).

The first 16 residues, 1-16 (MFLLPRFVLVSCIIGS), serve as a signal peptide directing secretion. The esterase domain 1 stretch occupies residues 7 to 127 (FVLVSCIIGS…SNDIWMQNKG (121 aa)). The Virion surface portion of the chain corresponds to 17 to 392 (LGFENPPTNV…PICVYDPLPL (376 aa)). Catalysis depends on serine 40, which acts as the Nucleophile. Cysteine 44 and cysteine 65 are joined by a disulfide. Residues asparagine 54, asparagine 89, asparagine 153, asparagine 236, and asparagine 301 are each glycosylated (N-linked (GlcNAc...) asparagine; by host). Intrachain disulfides connect cysteine 113/cysteine 162, cysteine 197/cysteine 276, and cysteine 205/cysteine 249. Residues 128–266 (LFYTQVYKNM…GNYLAISNEL (139 aa)) are receptor binding. The segment at 267–379 (LLTVPTKAIC…RCPTAADINT (113 aa)) is esterase domain 2. Cysteine 307 and cysteine 312 form a disulfide bridge. N-linked (GlcNAc...) asparagine; by host glycosylation occurs at asparagine 316. Residues aspartate 326 and histidine 329 each act as charge relay system in the active site. Cysteine 347 and cysteine 371 are disulfide-bonded. The N-linked (GlcNAc...) asparagine; by host glycan is linked to asparagine 358. Residues 393–413 (ILLGILLGVAVIIIVVLLLYF) traverse the membrane as a helical segment. The Intravirion segment spans residues 414 to 424 (MVDNGTRLHDA). A glycan (N-linked (GlcNAc...) asparagine; by host) is linked at asparagine 417.

The protein belongs to the influenza type C/coronaviruses hemagglutinin-esterase family. In terms of assembly, homodimer; disulfide-linked. Forms a complex with the M protein in the pre-Golgi. Associates then with S-M complex to form a ternary complex S-M-HE. N-glycosylated in the host RER.

The protein localises to the virion membrane. It is found in the host cell membrane. It catalyses the reaction N-acetyl-9-O-acetylneuraminate + H2O = N-acetylneuraminate + acetate + H(+). The catalysed reaction is N-acetyl-4-O-acetylneuraminate + H2O = N-acetylneuraminate + acetate + H(+). Structural protein that makes short spikes at the surface of the virus. Contains receptor binding and receptor-destroying activities. Mediates de-O-acetylation of N-acetyl-4-O-acetylneuraminic acid, which is probably the receptor determinant recognized by the virus on the surface of erythrocytes and susceptible cells. This receptor-destroying activity is important for virus release as it probably helps preventing self-aggregation and ensures the efficient spread of the progeny virus from cell to cell. May serve as a secondary viral attachment protein for initiating infection, the spike protein being the major one. May become a target for both the humoral and the cellular branches of the immune system. This Bovine coronavirus (strain G95) (BCoV) protein is Hemagglutinin-esterase.